A 117-amino-acid polypeptide reads, in one-letter code: MNAPPTFESFLLYEGEKKIIKELDTKVTNAAIFTINKEDHTLGNMIRNQLLKDPNVLFAGYKVPHPLEHKFVIRIQTTADYSPQEAFMNAITDLLAELSLFEERFKDAIKEKKEGGD.

The protein belongs to the archaeal Rpo11/eukaryotic RPB11/RPC19 RNA polymerase subunit family. As to quaternary structure, component of the RNA polymerase II (Pol II) complex consisting of 12 subunits.

It is found in the nucleus. In terms of biological role, DNA-dependent RNA polymerase catalyzes the transcription of DNA into RNA using the four ribonucleoside triphosphates as substrates. Component of RNA polymerase II which synthesizes mRNA precursors and many functional non-coding RNAs. Pol II is the central component of the basal RNA polymerase II transcription machinery. It is composed of mobile elements that move relative to each other. RPB11 is part of the core element with the central large cleft. The chain is DNA-directed RNA polymerase II subunit RPB11 from Drosophila melanogaster (Fruit fly).